Consider the following 417-residue polypeptide: Mitochondrial inner membrane i-AAA protease supercomplex subunit MGR1 (417 aa).

The segment at 1-28 is disordered; the sequence is MAVFTPPSGNSNSTDHTHTQDDHDKDDN. Residues 1 to 56 are Mitochondrial intermembrane-facing; sequence MAVFTPPSGNSNSTDHTHTQDDHDKDDNDIKKFYIRPSLGLKLWGPLVPAPDNLPG. The span at 15–28 shows a compositional bias: basic and acidic residues; that stretch reads DHTHTQDDHDKDDN. The chain crosses the membrane as a helical span at residues 57–73; the sequence is LYTLITIQSAVGFFALW. At 74-151 the chain is on the mitochondrial matrix side; it reads RLRRLYKLPP…RQSRFVSVRK (78 aa). A helical membrane pass occupies residues 152–169; it reads LLWGLFGSLLLSQSLLEL. Residues 170 to 417 are Mitochondrial intermembrane-facing; sequence TRLNFLKYDP…PKALTNEKTH (248 aa). The span at 391–401 shows a compositional bias: polar residues; that stretch reads SHTKTPTSTDQ. Residues 391–417 form a disordered region; it reads SHTKTPTSTDQPLPGPTPKALTNEKTH.

Belongs to the MGR1 family. Component of the mitochondrial inner membrane i-AAA protease supercomplex composed of MGR1, MGR3 and YME1. With MGR3, forms a subcomplex that binds to YME1 and to substrates to facilitate proteolysis. Interacts directly with YME1.

The protein localises to the mitochondrion inner membrane. Functionally, component of the mitochondrial inner membrane i-AAA protease supercomplex required for mitochondrial inner membrane protein turnover. Together with MGR3, functions in an adapter complex that targets substrates to the i-AAA protease for degradation. Required for growth of cells lacking the mitochondrial genome. The sequence is that of Mitochondrial inner membrane i-AAA protease supercomplex subunit MGR1 (MGR1) from Saccharomyces cerevisiae (strain ATCC 204508 / S288c) (Baker's yeast).